The following is a 450-amino-acid chain: MDTIVAVATPPGKGAIAILRLSGPDSWKIVQKHLRTRSKIVPRKAIHGWIHENGEDVDEVVVVFYKSPKSYTGEDMVEVMCHGGPLVVKKLLDLFLKSGARMAEPGEFTKRAFLNGKMDLTSAEAVRDLIEAKSETSLKLSLRNLKGGLRDFVDSLRRELIEVLAEIRVELDYPDEIETNTGEVVTRLERIKEKLTEELKKADAGILLNRGLRMVIVGKPNVGKSTLLNRLLNEDRAIVTDIPGTTRDVISEEIVIRGILFRIVDTAGVRSETNDLVERLGIERTLQEIEKADIVLFVLDASSPLDEEDRKILERIKNKRYLVVINKVDVVEKINEEEIKNKLGTDRHMVKISALKGEGLEKLEESIYRETQEIFERGSDSLITNLRQKQLLENVKGHLEDAIKSLKEGMPVDMASIDLERALNLLDEVTGRSFREDLLDTIFSNFCVGK.

Positions 20, 78, and 117 each coordinate (6S)-5-formyl-5,6,7,8-tetrahydrofolate. A TrmE-type G domain is found at 211 to 372; it reads GLRMVIVGKP…LEESIYRETQ (162 aa). K(+) is bound at residue asparagine 221. GTP is bound by residues 221-226, 240-246, 265-268, 326-329, and 353-355; these read NVGKST, TDIPGTT, DTAG, NKVD, and SAL. Serine 225 lines the Mg(2+) pocket. K(+)-binding residues include threonine 240, isoleucine 242, and threonine 245. Threonine 246 lines the Mg(2+) pocket. Residue lysine 450 coordinates (6S)-5-formyl-5,6,7,8-tetrahydrofolate.

It belongs to the TRAFAC class TrmE-Era-EngA-EngB-Septin-like GTPase superfamily. TrmE GTPase family. As to quaternary structure, homodimer. Heterotetramer of two MnmE and two MnmG subunits. K(+) is required as a cofactor.

The protein resides in the cytoplasm. In terms of biological role, exhibits a very high intrinsic GTPase hydrolysis rate. Involved in the addition of a carboxymethylaminomethyl (cmnm) group at the wobble position (U34) of certain tRNAs, forming tRNA-cmnm(5)s(2)U34. This Thermotoga maritima (strain ATCC 43589 / DSM 3109 / JCM 10099 / NBRC 100826 / MSB8) protein is tRNA modification GTPase MnmE.